The chain runs to 72 residues: Holocyclotoxin-1 (72 aa).

Positions 1–22 (MSKVTTVFIGALVLLLLIENGF) are cleaved as a signal peptide. 4 cysteine pairs are disulfide-bonded: cysteine 24-cysteine 40, cysteine 32-cysteine 57, cysteine 36-cysteine 60, and cysteine 42-cysteine 70.

As to expression, expressed in salivary glands.

Its subcellular location is the secreted. Functionally, probable neurotoxin. This chain is Holocyclotoxin-1, found in Ixodes holocyclus (Australian paralysis tick).